We begin with the raw amino-acid sequence, 629 residues long: MTSCVHLGIVASQSKKMSLAKRFAQLRKASPLFSLRGVYFSAASYDYREKLSRNVLLDLKLDDAVDLFGEMVQSRPLPSIVEFNKLLSAIAKMNKFDLVISLGERMQNLRISYDLYSYNILINCFCRRSQLPLALAVLGKMMKLGYEPDIVTLSSLLNGYCHGKRISEAVALVDQMFVMEYQPNTVTFNTLIHGLFLHNKASEAVALIDRMVARGCQPDLFTYGTVVNGLCKRGDIDLALSLLKKMEKGKIEADVVIYTTIIDALCNYKNVNDALNLFTEMDNKGIRPNVVTYNSLIRCLCNYGRWSDASRLLSDMIERKINPNVVTFSALIDAFVKEGKLVEAEKLYDEMIKRSIDPDIFTYSSLINGFCMHDRLDEAKHMFELMISKDCFPNVVTYNTLIKGFCKAKRVEEGMELFREMSQRGLVGNTVTYNTLIQGLFQAGDCDMAQKIFKKMVSDGVPPDIITYSILLDGLCKYGKLEKALVVFEYLQKSKMEPDIYTYNIMIEGMCKAGKVEDGWDLFCSLSLKGVKPNVIIYTTMISGFCRKGLKEEADALFREMKEDGTLPNSGTYNTLIRARLRDGDKAASAELIKEMRSCGFVGDASTISMVINMLHDGRLEKSYLEMLS.

A chloroplast-targeting transit peptide spans 1–41 (MTSCVHLGIVASQSKKMSLAKRFAQLRKASPLFSLRGVYFS). PPR repeat units lie at residues 79-113 (SIVE…RISY), 114-148 (DLYS…GYEP), 149-183 (DIVT…EYQP), 184-218 (NTVT…GCQP), 219-253 (DLFT…KIEA), 254-288 (DVVI…GIRP), 289-323 (NVVT…KINP), 324-358 (NVVT…SIDP), 359-393 (DIFT…DCFP), 394-428 (NVVT…GLVG), 429-463 (NTVT…GVPP), 464-498 (DIIT…KMEP), 499-533 (DIYT…GVKP), 534-568 (NVII…GTLP), and 569-603 (NSGT…GFVG).

Belongs to the PPR family. P subfamily.

The protein localises to the plastid. Its subcellular location is the chloroplast. The chain is Pentatricopeptide repeat-containing protein At1g62930, chloroplastic from Arabidopsis thaliana (Mouse-ear cress).